The following is a 471-amino-acid chain: Indole-3-acetate beta-glucosyltransferase (471 aa).

Catalysis depends on H15, which acts as the Proton acceptor. H15 is an an anthocyanidin binding site. The active-site Charge relay is D107. 9 residues coordinate UDP-alpha-D-glucose: T129, Q344, H359, W362, N363, S364, E367, D383, and Q384.

It belongs to the UDP-glycosyltransferase family.

The catalysed reaction is (indol-3-yl)acetate + UDP-alpha-D-glucose = 1-O-(indol-3-ylacetyl)-beta-D-glucose + UDP. Its pathway is plant hormone metabolism; auxin conjugation. In Zea mays (Maize), this protein is Indole-3-acetate beta-glucosyltransferase (IAGLU).